The chain runs to 492 residues: WD repeat-containing protein JIP5 (492 aa).

5 WD repeats span residues 127–166, 178–217, 236–274, 276–317, and 365–405; these read RHKGSVRAMCFDSKGDNIFSVGSDNVLKKANTMTGKVVKK, KKNDKFTKLCASQTHPFILIGDESGNIHVINSENLALSNS, RSAYKFISLGQTTLAYFDVRDKDAKPNVAGNEDGKILIS, DQED…LEDQ, and RNHS…VEEN. Composition is skewed to acidic residues over residues 404 to 414 and 422 to 433; these read ENASVESDSDE and DLSDDTSSDDET. The tract at residues 404–472 is disordered; it reads ENASVESDSD…SKSVKKRKIM (69 aa). Over residues 449-462 the composition is skewed to basic and acidic residues; sequence KDLKEDHQEEKESN.

As to quaternary structure, interacts with BUD27 and GIS1.

The protein localises to the nucleus. It is found in the nucleolus. The chain is WD repeat-containing protein JIP5 (JIP5) from Saccharomyces cerevisiae (strain ATCC 204508 / S288c) (Baker's yeast).